We begin with the raw amino-acid sequence, 489 residues long: Otolin-1-A (489 aa).

Residues M1–A23 form the signal peptide. The tract at residues K27 to V57 is disordered. N-linked (GlcNAc...) asparagine glycosylation is present at N109. Positions G133 to K335 are disordered. The segment covering G142–G151 has biased composition (gly residues). Collagen-like domains are found at residues G145–K204, G205–K255, and G264–R323. Over residues Q192–D206 the composition is skewed to basic and acidic residues. A glycan (N-linked (GlcNAc...) asparagine) is linked at N225. Residues G226 to G235 show a composition bias toward gly residues. Positions I248–D257 are enriched in basic and acidic residues. N287 carries an N-linked (GlcNAc...) asparagine glycan. Residues D290–E310 show a composition bias toward low complexity. The C1q domain maps to A351–K488. 2 N-linked (GlcNAc...) asparagine glycosylation sites follow: N391 and N396.

The protein belongs to the OTOL1 family. Homooligomer; disulfide-linked; probably forms homotrimers. Interacts with otomp.

The protein localises to the secreted. It is found in the extracellular space. The protein resides in the extracellular matrix. Its function is as follows. Collagen-like protein, which provides an organic scaffold for otoliths onto the sensory epithelium of the inner ear. Acts as a scaffold for biomineralization by sequestering calcium. The sequence is that of Otolin-1-A (otol1a) from Danio rerio (Zebrafish).